A 299-amino-acid polypeptide reads, in one-letter code: Plasmodesmata-located protein 5 (299 aa).

The first 25 residues, 1-25, serve as a signal peptide directing secretion; sequence MIKTKTTSLLCFLLTAVILMNPSSS. At 26–264 the chain is on the extracellular side; the sequence is SPTDNYIYAV…NKDDNGVGKT (239 aa). 2 consecutive Gnk2-homologous domains span residues 29–135 and 137–237; these read DNYI…NKSF and GVQD…VGGS. Intrachain disulfides connect Cys36/Cys113, Cys89/Cys98, Cys101/Cys126, Cys148/Cys215, Cys191/Cys200, and Cys203/Cys228. Residues 265 to 285 traverse the membrane as a helical segment; it reads LAIIIGIVTLIILLVVFLAFV. A necessary and sufficient for plasmodesmal targeting region spans residues 265–285; that stretch reads LAIIIGIVTLIILLVVFLAFV. Residues 286–299 are Cytoplasmic-facing; sequence GKCCRKLQDEKWCK.

The protein belongs to the cysteine-rich repeat secretory protein family. Plasmodesmata-located proteins (PDLD) subfamily. As to quaternary structure, monomer. Interacts with PDLP1. (Microbial infection) Interacts with Grapevine fanleaf virus (GFLV) 2B-MP. As to expression, highly expressed in inflorescence nodes and rosette senescent leaves. Mostly expressed in cell wall junctions between leaf epidermal and mesophyl cells, and to a lesser extent at the cross walls between epidermal or cortex cells within the hypocotyl (at protein level). Low vascular expression in seedling and mature leaf, but high expression in senescing leaves (at protein level).

It is found in the cell membrane. It localises to the cell junction. The protein resides in the plasmodesma. Modulates cell-to-cell trafficking. Has a positive role in innate immunity. Required for systemic acquired resistance (SAR) which is mediated by the signaling molecules azelaic acid (AzA), glycerol-3-phosphate (G3P), and salicylic acid (SA). Negative regulator of plasmodesmata permeability triggered by SA during immune responses, through regulation of callose deposition. Delays the trafficking of Tobacco Mosaic Virus (TMV) movement protein (MP). Required for symplastic signal transport. This Arabidopsis thaliana (Mouse-ear cress) protein is Plasmodesmata-located protein 5.